The chain runs to 196 residues: Na(+)-translocating ferredoxin:NAD(+) oxidoreductase complex subunit E (196 aa).

A run of 5 helical transmembrane segments spans residues Met38–Leu58, Ile68–Ala88, Ala92–Ala112, Phe127–Ile147, and Val169–Ile189.

Belongs to the NqrDE/RnfAE family. The complex is composed of six subunits: RnfA, RnfB, RnfC, RnfD, RnfE and RnfG.

It is found in the cell membrane. It catalyses the reaction 2 reduced [2Fe-2S]-[ferredoxin] + Na(+)(in) + NAD(+) + H(+) = 2 oxidized [2Fe-2S]-[ferredoxin] + Na(+)(out) + NADH. Part of a membrane-bound complex that couples electron transfer with translocation of ions across the membrane. Couples electron transfer from reduced ferredoxin to NAD(+) with electrogenic movement of Na(+) out of the cell. Involved in caffeate respiration. The chain is Na(+)-translocating ferredoxin:NAD(+) oxidoreductase complex subunit E from Acetobacterium woodii (strain ATCC 29683 / DSM 1030 / JCM 2381 / KCTC 1655 / WB1).